We begin with the raw amino-acid sequence, 264 residues long: NAD-capped RNA hydrolase NudC (264 aa).

Residues Cys99 and Cys102 each coordinate Zn(2+). Glu112 provides a ligand contact to substrate. 2 residues coordinate Zn(2+): Cys117 and Cys120. Tyr125 lines the substrate pocket. In terms of domain architecture, Nudix hydrolase spans 126–253 (PVICPSIIVA…TIARKLIHAT (128 aa)). 3 residues coordinate a divalent metal cation: Ala162, Glu178, and Glu182. Residues 163–184 (GFVEVGETFEQAVQREVFEETG) carry the Nudix box motif. 196–203 (QPWAFPNS) is a substrate binding site. A divalent metal cation is bound at residue Glu223. Residue Ala246 participates in substrate binding.

This sequence belongs to the Nudix hydrolase family. NudC subfamily. In terms of assembly, homodimer. Mg(2+) is required as a cofactor. Requires Mn(2+) as cofactor. The cofactor is Zn(2+).

The catalysed reaction is a 5'-end NAD(+)-phospho-ribonucleoside in mRNA + H2O = a 5'-end phospho-adenosine-phospho-ribonucleoside in mRNA + beta-nicotinamide D-ribonucleotide + 2 H(+). It carries out the reaction NAD(+) + H2O = beta-nicotinamide D-ribonucleotide + AMP + 2 H(+). It catalyses the reaction NADH + H2O = reduced beta-nicotinamide D-ribonucleotide + AMP + 2 H(+). Functionally, mRNA decapping enzyme that specifically removes the nicotinamide adenine dinucleotide (NAD) cap from a subset of mRNAs by hydrolyzing the diphosphate linkage to produce nicotinamide mononucleotide (NMN) and 5' monophosphate mRNA. The NAD-cap is present at the 5'-end of some mRNAs and stabilizes RNA against 5'-processing. Has preference for mRNAs with a 5'-end purine. Catalyzes the hydrolysis of a broad range of dinucleotide pyrophosphates. This Haemophilus influenzae (strain PittGG) protein is NAD-capped RNA hydrolase NudC.